We begin with the raw amino-acid sequence, 147 residues long: Hemoglobin subunit epsilon (147 aa).

The 145-residue stretch at 3 to 147 (HFTAEEKAII…VATALAHKYH (145 aa)) folds into the Globin domain. A phosphoserine mark is found at serine 14 and serine 51. The heme b site is built by histidine 64 and histidine 93.

Belongs to the globin family. Heterotetramer of two alpha chains and two epsilon chains in early embryonic hemoglobin Gower-2; two zeta chains and two epsilon chains in early embryonic hemoglobin Gower-1. Red blood cells.

Its function is as follows. The epsilon chain is a beta-type chain of early mammalian embryonic hemoglobin. This chain is Hemoglobin subunit epsilon (HBE1), found in Otolemur crassicaudatus (Brown greater galago).